Consider the following 451-residue polypeptide: Bifunctional protein GlmU (451 aa).

The interval 1 to 225 (MLEIIILAAG…EYEVLGVNNR (225 aa)) is pyrophosphorylase. UDP-N-acetyl-alpha-D-glucosamine contacts are provided by residues 7–10 (LAAG), lysine 21, glutamine 72, 77–78 (GT), 99–101 (YGD), glycine 136, glutamate 150, asparagine 165, and asparagine 223. Position 101 (aspartate 101) interacts with Mg(2+). Asparagine 223 contributes to the Mg(2+) binding site. Positions 226 to 246 (LQQAELERIFQRQVAEELMVA) are linker. Residues 247–451 (GATLLDPARL…IKGWARPVKK (205 aa)) are N-acetyltransferase. Residues arginine 329 and lysine 347 each contribute to the UDP-N-acetyl-alpha-D-glucosamine site. The active-site Proton acceptor is histidine 359. 2 residues coordinate UDP-N-acetyl-alpha-D-glucosamine: tyrosine 362 and asparagine 373. Acetyl-CoA-binding positions include alanine 376, 382–383 (NY), serine 401, alanine 419, and arginine 436.

This sequence in the N-terminal section; belongs to the N-acetylglucosamine-1-phosphate uridyltransferase family. The protein in the C-terminal section; belongs to the transferase hexapeptide repeat family. As to quaternary structure, homotrimer. Mg(2+) is required as a cofactor.

The protein localises to the cytoplasm. It carries out the reaction alpha-D-glucosamine 1-phosphate + acetyl-CoA = N-acetyl-alpha-D-glucosamine 1-phosphate + CoA + H(+). The catalysed reaction is N-acetyl-alpha-D-glucosamine 1-phosphate + UTP + H(+) = UDP-N-acetyl-alpha-D-glucosamine + diphosphate. The protein operates within nucleotide-sugar biosynthesis; UDP-N-acetyl-alpha-D-glucosamine biosynthesis; N-acetyl-alpha-D-glucosamine 1-phosphate from alpha-D-glucosamine 6-phosphate (route II): step 2/2. It functions in the pathway nucleotide-sugar biosynthesis; UDP-N-acetyl-alpha-D-glucosamine biosynthesis; UDP-N-acetyl-alpha-D-glucosamine from N-acetyl-alpha-D-glucosamine 1-phosphate: step 1/1. It participates in bacterial outer membrane biogenesis; LPS lipid A biosynthesis. Catalyzes the last two sequential reactions in the de novo biosynthetic pathway for UDP-N-acetylglucosamine (UDP-GlcNAc). The C-terminal domain catalyzes the transfer of acetyl group from acetyl coenzyme A to glucosamine-1-phosphate (GlcN-1-P) to produce N-acetylglucosamine-1-phosphate (GlcNAc-1-P), which is converted into UDP-GlcNAc by the transfer of uridine 5-monophosphate (from uridine 5-triphosphate), a reaction catalyzed by the N-terminal domain. The polypeptide is Bifunctional protein GlmU (Saccharophagus degradans (strain 2-40 / ATCC 43961 / DSM 17024)).